Here is a 116-residue protein sequence, read N- to C-terminus: Galanin-like peptide (116 aa).

An N-terminal signal peptide occupies residues 1–24; sequence MAPPSVPLVLLLVLLLSLAETPAS. The propeptide occupies 87-116; it reads NVMETFAKPEIGDLGMLSMKIPKEEDVLKS.

The protein belongs to the galanin family. Isoform 2 is found in ganglia of ganglioneuroma and ganglioneuroblastoma, as well as in differentiated tumor cells of neuroblastoma tissues. Not found in undifferentiated neuroblasts. Isoform 2 is found in the skin, in pericytes covering microvascular arterioles and venules on their abluminal surfaces. In larger vessels, isoform 2 is expressed in layers of smooth muscle cells. Isoform 2 is not detected in endothelial cells.

It localises to the secreted. Its function is as follows. Hypothalamic neuropeptide which binds to the G-protein-coupled galanin receptors (GALR1, GALR2 and GALR3). Involved in a large number of putative physiological functions in CNS homeostatic processes, including the regulation of gonadotropin-releasing hormone secretion. In terms of biological role, exhibits potent and dose-dependent vasoconstrictor and anti-edema activity in the cutaneous microvasculature, a physiologic effects which does not appear to be mediated via GALR1 or GALR2. Exhibits antimicrobial activity against Gram-negative bacterias, inducing bacterial membrane blebbing. This Homo sapiens (Human) protein is Galanin-like peptide (GALP).